The chain runs to 680 residues: Zinc finger protein 334 (680 aa).

Positions 10-81 (VSFQDLTVNF…EEFSNQNYPD (72 aa)) constitute a KRAB domain. C2H2-type zinc fingers lie at residues 237–259 (NECNECRKTFSKRSTLIVHQRIH), 265–287 (YVCSDCRKTFRVKTSLTRHRRIH), 293–315 (YECSECRKTFIDKSALIVHQKIH), 321–343 (YECNECGKTFFRKSALAEHFRSH), 349–371 (YECKECGNAFSKKSYLVVHQRTH), 377–399 (NECKECGKTFFCQSALTAHQRIH), 405–427 (YECSECEKTFFCQSALNVHRRSH), 433–455 (YECSQCGKFLCTKSALIAHQITH), 461–483 (YECNECGKFFCHKSTLTIHQRTH), 544–566 (YECNECGRTYCRKSALTHHQRTH), 572–594 (YECNECGKTFCQKFSFVEHQRTH), 600–622 (YECNECGKSFCHKSAFRVHRRIH), 628–650 (YECNQCGKTYRRLWTLTEHQKIH), and 656–678 (YECNKCEKTFRHKSNFLLHQKSH).

The protein belongs to the krueppel C2H2-type zinc-finger protein family.

The protein resides in the nucleus. Its function is as follows. May be involved in transcriptional regulation. The polypeptide is Zinc finger protein 334 (ZNF334) (Homo sapiens (Human)).